Reading from the N-terminus, the 358-residue chain is Trace amine-associated receptor 7h (358 aa).

The Extracellular portion of the chain corresponds to 1 to 47 (MATDDESFPWDQDSILSRDLLSALSPQLCYENLNRSCVRSPYSPGPR). Asn-34 is a glycosylation site (N-linked (GlcNAc...) asparagine). Cystine bridges form between Cys-37/Cys-201 and Cys-120/Cys-205. A helical transmembrane segment spans residues 48–68 (LILYAVFGFGAVLAVCGNLLV). Residues 69–83 (MTSILHFRQLHSPAN) lie on the Cytoplasmic side of the membrane. Residues 84–104 (FLVASLACADLLVGLTVMPFS) form a helical membrane-spanning segment. At 105–125 (MVRSVEGCWYFGDSYCKLHTS) the chain is on the extracellular side. The chain crosses the membrane as a helical span at residues 126–143 (FDMSFCCSSLLHLCFISV). Topologically, residues 144–166 (DRYIAVSDPLIYPIRFTASVSGK) are cytoplasmic. The chain crosses the membrane as a helical span at residues 167-187 (CITFSWFLSIIYGFSLIYTGA). Residues 188–217 (SEAGLKDLVSALSCVGGCQIPMNQSCVLIN) are Extracellular-facing. Asn-210 carries an N-linked (GlcNAc...) asparagine glycan. A helical transmembrane segment spans residues 218-238 (FLLFLVPTLVMMTVYSKIFLI). Topologically, residues 239-274 (AKQQAQNMEKMSKQTTRASDSYKDRVAKRERKAAKT) are cytoplasmic. A helical transmembrane segment spans residues 275 to 295 (LGIAVAAFLLSWLPYLIDSII). The Extracellular portion of the chain corresponds to 296–309 (DAFLGFITPSYVYE). The chain crosses the membrane as a helical span at residues 310-333 (ILVWIVYYNSAMNPLIYAFFYPWF). Over 334 to 358 (RNAIKLIVTGKILKQNSSTTNLFSE) the chain is Cytoplasmic.

Belongs to the G-protein coupled receptor 1 family.

The protein resides in the cell membrane. Olfactory receptor specific for N,N-dimethylalkylamines trace amines. Trace amine compounds are enriched in animal body fluids and act on trace amine-associated receptors (TAARs) to elicit both intraspecific and interspecific innate behaviors. Ligand-binding causes a conformation change that triggers signaling via G(s)-class of G alpha proteins (GNAL or GNAS). The chain is Trace amine-associated receptor 7h from Rattus norvegicus (Rat).